The primary structure comprises 599 residues: rRNA (cytosine-C(5))-methyltransferase NOP2C (599 aa).

In terms of domain architecture, PUA spans 158–265 (PKEVLVSRKC…IAVDLNHRVF (108 aa)). S-adenosyl-L-methionine-binding positions include 304–310 (CAAPGGK), Asp328, and Asp355. The tract at residues 372 to 454 (LINGDNSSSM…GGRAGKSQGF (83 aa)) is disordered. Residues 378-388 (SSSMTSHSELS) show a composition bias toward low complexity. Residues 399–412 (RRSEADKSCEKNDS) show a composition bias toward basic and acidic residues. Polar residues predominate over residues 413–424 (TEQPNGGDNVSQ). Positions 428 to 438 (RKNKGRLKNGR) are enriched in basic residues. S-adenosyl-L-methionine is bound at residue Asp465. Cys516 acts as the Nucleophile in catalysis.

The protein belongs to the class I-like SAM-binding methyltransferase superfamily. RsmB/NOP family.

Its subcellular location is the nucleus. The protein resides in the nucleolus. It catalyses the reaction a cytidine in rRNA + S-adenosyl-L-methionine = a 5-methylcytidine in rRNA + S-adenosyl-L-homocysteine + H(+). Involved in ribosomal large subunit assembly. S-adenosyl-L-methionine-dependent methyltransferase that may methylates the C(5) position of cytosine in rRNA. May play a role in the regulation of the cell cycle and the increased nucleolar activity that is associated with the cell proliferation. Seems involved in the regulation of cell proliferation. The chain is rRNA (cytosine-C(5))-methyltransferase NOP2C from Arabidopsis thaliana (Mouse-ear cress).